Reading from the N-terminus, the 160-residue chain is Cytochrome b6-f complex subunit 4 (160 aa).

3 helical membrane passes run 36 to 56 (LLYI…GLAI), 95 to 115 (LLGV…PFLE), and 131 to 151 (TVFL…TLPI).

It belongs to the cytochrome b family. PetD subfamily. As to quaternary structure, the 4 large subunits of the cytochrome b6-f complex are cytochrome b6, subunit IV (17 kDa polypeptide, petD), cytochrome f and the Rieske protein, while the 4 small subunits are petG, petL, petM and petN. The complex functions as a dimer.

The protein localises to the plastid. It is found in the chloroplast thylakoid membrane. Functionally, component of the cytochrome b6-f complex, which mediates electron transfer between photosystem II (PSII) and photosystem I (PSI), cyclic electron flow around PSI, and state transitions. This is Cytochrome b6-f complex subunit 4 from Oenothera elata subsp. hookeri (Hooker's evening primrose).